Here is a 2370-residue protein sequence, read N- to C-terminus: Genome polyprotein (2370 aa).

A lipid anchor (N-myristoyl glycine; by host) is attached at Gly112. 2 disordered regions span residues 140 to 173 (VGDM…GNVV) and 704 to 736 (GADG…FDYP). Low complexity predominate over residues 154-171 (GSNKGGSSTSPKSTSNGN). Polar residues predominate over residues 713-725 (APTSDLSDGNPTT). The 165-residue stretch at 1358–1522 (YSTALSAISL…AAFSAAAALK (165 aa)) folds into the SF3 helicase domain. 1384 to 1391 (GPPGTGKS) lines the ATP pocket. Gly1597 carries the N-myristoyl glycine; by host lipid modification. Residues 1646 to 1666 (IFAASSFLSLIAATLTIVRCL) form a helical membrane-spanning segment. The interval 1674–1696 (GAYSGTPVPKPRKKDLPKQPVYS) is disordered. Tyr1676 carries the post-translational modification O-(5'-phospho-RNA)-tyrosine. A Peptidase C3 domain is found at 1697 to 1886 (GPVRRQGFDP…FSARLTPERV (190 aa)). Residues His1745, Glu1776, and Cys1849 each act as for protease 3C activity in the active site. The segment covering 2007-2016 (SPGYPWTTQG) has biased composition (polar residues). The disordered stretch occupies residues 2007-2026 (SPGYPWTTQGRSRRSLFDED). The region spanning 2122-2239 (SNVWSIDYSC…GSNQDFHPRE (118 aa)) is the RdRp catalytic domain. Active-site for RdRp activity residues include Asp2128 and Asp2225.

In terms of assembly, interacts with capsid protein VP1. Interacts with capsid protein VP3. As to quaternary structure, interacts with capsid protein VP0. Interacts with capsid protein VP3. Interacts with capsid protein VP0. Interacts with capsid protein VP1. In terms of assembly, homodimer. Interacts with protein 2B. Interacts with protein 2C. As to quaternary structure, homodimer. Interacts with host ABCD3. Interacts with protein 2A. Interacts with host ACBD3. Homodimer. Interacts with host ABCD3. Interacts with protein 2A. Interacts with protein 3A. Interacts with protein 3C. Interacts with host ACBD3. In terms of assembly, homodimer. Interacts with host ABCD3 (via GOLD domain) and PI4KB; these interactions allow the formation of a viral protein/ACBD3/PI4KB complex in order to synthesize PI4P at the viral RNA replication sites. Interacts with protein 2C. Interacts with protein 3C. Protein 3C: Interacts with protein 2A. Protein 3C: Interacts with protein 2C. In terms of processing, specific enzymatic cleavages by the viral protease in vivo yield a variety of precursors and mature proteins. The leader protein-VP0 junction is cleaved by 3C proteinase. The VP1/2A junction is cleaved by the protein 3CD in association with protein 2A. Post-translationally, uridylylated by the polymerase and is covalently linked to the 5'-end of genomic RNA. This uridylylated form acts as a nucleotide-peptide primer for the polymerase.

The protein localises to the virion. Its subcellular location is the host cytoplasm. The protein resides in the host cytoplasmic vesicle membrane. It localises to the host Golgi apparatus membrane. It catalyses the reaction RNA(n) + a ribonucleoside 5'-triphosphate = RNA(n+1) + diphosphate. The catalysed reaction is Selective cleavage of Gln-|-Gly bond in the poliovirus polyprotein. In other picornavirus reactions Glu may be substituted for Gln, and Ser or Thr for Gly.. The enzyme catalyses ATP + H2O = ADP + phosphate + H(+). In terms of biological role, required for viral RNA replication and viral RNA encapsidation. Does not have any proteolytic activity. Its function is as follows. Forms an icosahedral capsid of pseudo T=3 symmetry with capsid proteins VP0 and VP3. Together they form an icosahedral capsid composed of 60 copies of each VP0, VP1, and VP3. All the three latter proteins contain a beta-sheet structure called beta-barrel jelly roll. Forms an icosahedral capsid of pseudo T=3 symmetry with capsid proteins VP1 and VP3. Together they form an icosahedral capsid composed of 60 copies of each VP0, VP1, and VP3. All the three latter proteins contain a beta-sheet structure called beta-barrel jelly roll. Functionally, forms an icosahedral capsid of pseudo T=3 symmetry with capsid proteins VP0 and VP1. Together they form an icosahedral capsid composed of 60 copies of each VP0, VP1, and VP3. All the three latter proteins contain a beta-sheet structure called beta-barrel jelly roll. In terms of biological role, required for viral RNA replication. Does not have any proteolytic activity. Its function is as follows. Affects membrane integrity and causes an increase in membrane permeability. Induces and associates with structural rearrangements of intracellular membranes. Displays RNA-binding, nucleotide binding and NTPase activities. May play a role in virion morphogenesis and viral RNA encapsidation by interacting with the capsid protein VP3. Functionally, serves as membrane anchor via its hydrophobic domain. Plays an essential role in viral RNA replication by recruiting PI4KB at the viral replication sites, thereby allowing the formation of rearranged membranous structures where viral replication takes place. In terms of biological role, forms a primer, VPg-pU, which is utilized by the polymerase for the initiation of RNA chains. Its function is as follows. Cysteine protease that generates mature viral proteins from the precursor polyprotein. In addition to its proteolytic activity, it binds to viral RNA, and thus influences viral genome replication. RNA and substrate cooperatively bind to the protease. Replicates the genomic and antigenomic RNAs by recognizing replications specific signals. Performs VPg uridylylation. This is Genome polyprotein from Homo sapiens (Human).